A 272-amino-acid polypeptide reads, in one-letter code: Glycerol-3-phosphate acyltransferase (272 aa).

6 helical membrane-spanning segments follow: residues 9-29, 60-80, 99-119, 149-169, 173-193, and 226-246; these read IIILFLFIGYFIGNILFGILI, AIVMVLDFFKSWFSTFVCLLI, VIIYLGGFAAIIGHCFPCFYF, ASISPWMFFICFVLFWSICLI, VSLASIVTVFLLPIWSLIPHL, and LNWWYILVTFLLELLTAVLVI.

Belongs to the PlsY family. In terms of assembly, probably interacts with PlsX.

The protein localises to the cell membrane. It catalyses the reaction an acyl phosphate + sn-glycerol 3-phosphate = a 1-acyl-sn-glycero-3-phosphate + phosphate. Its pathway is lipid metabolism; phospholipid metabolism. Its function is as follows. Catalyzes the transfer of an acyl group from acyl-phosphate (acyl-PO(4)) to glycerol-3-phosphate (G3P) to form lysophosphatidic acid (LPA). This enzyme utilizes acyl-phosphate as fatty acyl donor, but not acyl-CoA or acyl-ACP. The protein is Glycerol-3-phosphate acyltransferase of Malacoplasma penetrans (strain HF-2) (Mycoplasma penetrans).